We begin with the raw amino-acid sequence, 221 residues long: UPF0502 protein VSAL_II0605 (221 aa).

This sequence belongs to the UPF0502 family.

This Aliivibrio salmonicida (strain LFI1238) (Vibrio salmonicida (strain LFI1238)) protein is UPF0502 protein VSAL_II0605.